The following is a 708-amino-acid chain: Prolyl 3-hydroxylase 2 (708 aa).

The first 24 residues, 1–24, serve as a signal peptide directing secretion; it reads MRERIWAPPLLLLLPLLLPPPLWG. TPR repeat units follow at residues 44 to 77, 148 to 181, 210 to 243, and 306 to 339; these read FDLL…HRRL, RVPY…NPEH, HMES…YFVE, and PLHY…HPDD. Asn449 and Asn549 each carry an N-linked (GlcNAc...) asparagine glycan. Residues 557 to 671 form the Fe2OG dioxygenase domain; that stretch reads THMVCRTALS…RCAVALWFTL (115 aa). His580, Asp582, and His652 together coordinate Fe cation. Arg662 is an active-site residue. A Prevents secretion from ER motif is present at residues 705–708; that stretch reads KDEL.

The protein belongs to the leprecan family. Fe cation serves as cofactor. It depends on L-ascorbate as a cofactor. Expression localized to the epithelia of bile ducts and to the sacroplasm of heart muscle and skeletal muscle. In the pancreas, localized to a subpopulation of Langerhans islet cells and in the salivary gland, expressed in acinar cells (at protein level). Expressed in adult heart, placenta, lung, liver, skeletal muscle and kidney. Detected in fetal heart, spleen, lung, liver skeletal muscle and kidney.

It localises to the endoplasmic reticulum. Its subcellular location is the sarcoplasmic reticulum. The protein localises to the golgi apparatus. It carries out the reaction L-prolyl-[collagen] + 2-oxoglutarate + O2 = trans-3-hydroxy-L-prolyl-[collagen] + succinate + CO2. With respect to regulation, inhibited by pyridine 2,4-dicarboxylate, an analog of 2-oxoglutarate. Its function is as follows. Prolyl 3-hydroxylase that catalyzes the post-translational formation of 3-hydroxyproline on collagens. Contributes to proline 3-hydroxylation of collagen COL4A1 and COL1A1 in tendons, the eye sclera and in the eye lens capsule. Has high activity with the type IV collagen COL4A1, and lower activity with COL1A1. Catalyzes hydroxylation of the first Pro in Gly-Pro-Hyp sequences where Hyp is 4-hydroxyproline. Has no activity on substrates that lack 4-hydroxyproline in the third position. The protein is Prolyl 3-hydroxylase 2 of Homo sapiens (Human).